The chain runs to 812 residues: Probable inorganic carbon transporter subunit DabA (812 aa).

Zn(2+)-binding residues include Cys-337, Asp-339, His-499, and Cys-514.

It belongs to the inorganic carbon transporter (TC 9.A.2) DabA family. In terms of assembly, forms a complex with DabB. Zn(2+) serves as cofactor.

The protein resides in the cell inner membrane. Its function is as follows. Part of an energy-coupled inorganic carbon pump. The protein is Probable inorganic carbon transporter subunit DabA of Xanthomonas euvesicatoria pv. vesicatoria (strain 85-10) (Xanthomonas campestris pv. vesicatoria).